Consider the following 452-residue polypeptide: GTPase Der (452 aa).

EngA-type G domains lie at 4–169 and 177–352; these read PIVA…PTTE and IKVA…ASHR. GTP-binding positions include 10-17, 57-61, 120-123, 183-190, 230-234, and 295-298; these read GRPNVGKS, DTGGL, NKCE, DTAGI, and NKWD. Residues 353 to 438 form the KH-like domain; the sequence is RRVSTAVINE…PIRLIWRGKS (86 aa).

Belongs to the TRAFAC class TrmE-Era-EngA-EngB-Septin-like GTPase superfamily. EngA (Der) GTPase family. As to quaternary structure, associates with the 50S ribosomal subunit.

Its function is as follows. GTPase that plays an essential role in the late steps of ribosome biogenesis. This is GTPase Der from Gloeothece citriformis (strain PCC 7424) (Cyanothece sp. (strain PCC 7424)).